Consider the following 182-residue polypeptide: Putative manganese efflux pump MntP (182 aa).

Transmembrane regions (helical) follow at residues 6–26, 37–57, 72–92, 101–121, 131–151, and 162–182; these read LIPL…VSLG, ILYI…IGMV, FAGA…SILE, IGIS…SVGL, IITI…GLLL, and YGEI…LFPI.

This sequence belongs to the MntP (TC 9.B.29) family.

The protein resides in the cell membrane. In terms of biological role, probably functions as a manganese efflux pump. This Bacillus mycoides (strain KBAB4) (Bacillus weihenstephanensis) protein is Putative manganese efflux pump MntP.